Here is a 211-residue protein sequence, read N- to C-terminus: Guanylate kinase (211 aa).

The Guanylate kinase-like domain occupies 5–184 (GLLIVFSGPS…AAERVKRIIE (180 aa)). 12–19 (GPSGVGKG) contacts ATP.

This sequence belongs to the guanylate kinase family.

Its subcellular location is the cytoplasm. The catalysed reaction is GMP + ATP = GDP + ADP. Its function is as follows. Essential for recycling GMP and indirectly, cGMP. This is Guanylate kinase from Streptococcus pyogenes serotype M1.